A 376-amino-acid polypeptide reads, in one-letter code: Transmembrane protein 43 homolog (376 aa).

Residues 1-10 are Cytoplasmic-facing; the sequence is MASLSETLRS. Residues 11-31 form a helical membrane-spanning segment; sequence HWPIALFGVILFVAGGTELYW. Over 32 to 277 the chain is Lumenal; sequence NEGRAVHNMM…EVFRLEARAQ (246 aa). A helical transmembrane segment spans residues 278 to 298; that stretch reads VLHTWWWRFVGWLLIFFGVTC. Over 299-323 the chain is Cytoplasmic; the sequence is NTKILRLLFVRVPLLVALAPDPQFP. Helical transmembrane passes span 324-344 and 345-365; these read VTGN…VAWI and LHRP…YVWF. The Cytoplasmic portion of the chain corresponds to 366 to 376; sequence TRNLVDYHRLD.

This sequence belongs to the TMEM43 family.

Its subcellular location is the endoplasmic reticulum membrane. It is found in the nucleus envelope. Involved in lipid metabolism and utilization. This is Transmembrane protein 43 homolog from Drosophila melanogaster (Fruit fly).